We begin with the raw amino-acid sequence, 474 residues long: 2-succinylbenzoate--CoA ligase (474 aa).

Belongs to the ATP-dependent AMP-binding enzyme family. MenE subfamily.

It carries out the reaction 2-succinylbenzoate + ATP + CoA = 2-succinylbenzoyl-CoA + AMP + diphosphate. Its pathway is quinol/quinone metabolism; 1,4-dihydroxy-2-naphthoate biosynthesis; 1,4-dihydroxy-2-naphthoate from chorismate: step 5/7. It participates in quinol/quinone metabolism; menaquinone biosynthesis. Converts 2-succinylbenzoate (OSB) to 2-succinylbenzoyl-CoA (OSB-CoA). The chain is 2-succinylbenzoate--CoA ligase from Staphylococcus epidermidis (strain ATCC 12228 / FDA PCI 1200).